Here is a 387-residue protein sequence, read N- to C-terminus: Putative serine/threonine-protein kinase (387 aa).

In terms of domain architecture, Protein kinase spans 15 to 344 (YQIEKLLNRG…ERVLEGQVEI (330 aa)). ATP is bound by residues 21–29 (LNRGGMDSY) and Lys55. Asp164 (proton acceptor) is an active-site residue. 2 helical membrane-spanning segments follow: residues 232-252 (PPNAQYDIYSLGIILFEMLVG) and 363-383 (SIFTIVFIGLIIAAIVLLLIF).

This sequence belongs to the protein kinase superfamily. Ser/Thr protein kinase family.

The protein resides in the cell membrane. It carries out the reaction L-seryl-[protein] + ATP = O-phospho-L-seryl-[protein] + ADP + H(+). It catalyses the reaction L-threonyl-[protein] + ATP = O-phospho-L-threonyl-[protein] + ADP + H(+). This is Putative serine/threonine-protein kinase from Mycoplasma genitalium (strain ATCC 33530 / DSM 19775 / NCTC 10195 / G37) (Mycoplasmoides genitalium).